A 249-amino-acid polypeptide reads, in one-letter code: Coproheme decarboxylase (249 aa).

Fe-coproporphyrin III is bound by residues arginine 131, 145–149, histidine 172, glutamine 185, and serine 223; that span reads YPMDK. Tyrosine 145 is an active-site residue.

This sequence belongs to the ChdC family. Type 1 subfamily. The cofactor is Fe-coproporphyrin III.

The catalysed reaction is Fe-coproporphyrin III + 2 H2O2 + 2 H(+) = heme b + 2 CO2 + 4 H2O. The enzyme catalyses Fe-coproporphyrin III + H2O2 + H(+) = harderoheme III + CO2 + 2 H2O. It catalyses the reaction harderoheme III + H2O2 + H(+) = heme b + CO2 + 2 H2O. It functions in the pathway porphyrin-containing compound metabolism; protoheme biosynthesis. Functionally, involved in coproporphyrin-dependent heme b biosynthesis. Catalyzes the decarboxylation of Fe-coproporphyrin III (coproheme) to heme b (protoheme IX), the last step of the pathway. The reaction occurs in a stepwise manner with a three-propionate intermediate. The protein is Coproheme decarboxylase of Halalkalibacterium halodurans (strain ATCC BAA-125 / DSM 18197 / FERM 7344 / JCM 9153 / C-125) (Bacillus halodurans).